We begin with the raw amino-acid sequence, 286 residues long: Undecaprenyl-diphosphatase (286 aa).

7 helical membrane passes run 43–63 (FWKMFSIVIQLGAILCLPIYF), 91–111 (LTIIAFLCTAIPAFLFTKIIG), 118–138 (IIMGSALLIGGIVMWIVDVMF), 150–170 (MSVGQAIWIGLCQVLSAVFPG), 189–209 (AAALEFSFFLSIPTMVVATCY), 236–256 (ITLAIGFIVSFIVAYFVVAWF), and 264–284 (GFVPFAVYRIVVGIAVLAWAL).

It belongs to the UppP family.

It is found in the cell inner membrane. It catalyses the reaction di-trans,octa-cis-undecaprenyl diphosphate + H2O = di-trans,octa-cis-undecaprenyl phosphate + phosphate + H(+). Functionally, catalyzes the dephosphorylation of undecaprenyl diphosphate (UPP). Confers resistance to bacitracin. The chain is Undecaprenyl-diphosphatase from Koribacter versatilis (strain Ellin345).